The following is a 307-amino-acid chain: MKTLKEKNKHPRLRKTIRTKKVTQRKLSSSPVCLLCLQEPGDPEKLGEFLQKDNLCVHYFCLILSSRLPQKGQPNRGLHGFMPEDIKREAVRASKKICFVCKKKGAAIRCQNDQCVQNFHLPCGQERGCLSQFFGEYKSYCRKHRPTQNIHQGSLGEESCVLCCENLSRTSVENIQSPCCSQAIYHRKCIQKYAHTSAKHFFKCPQCNNREEFPQEMLRMGIHIPDRDAAWELEPGAFSELYQRYRHCDAPICLYEQGRDSFEDEGRWRLILCATCGSHGTHRDCSSLRPNSKKWECNECLPASTTS.

The C2HC pre-PHD-type zinc finger occupies S30 to L68. Zn(2+) contacts are provided by C33, C36, H58, and C61. The segment at R67–R92 is required for interaction and ubiquitination of the nucleosome core particle. The segment at K96–R145 adopts a PHD-type zinc-finger fold. Residues C98, C101, C110, C115, H120, C123, C141, H144, C160, C163, C179, C180, H186, C189, C204, C207, C248, C253, C273, C276, H282, C285, C297, and C300 each coordinate Zn(2+). The required for interaction with ubiquitinated UBE2D2 stretch occupies residues I150–S307. The segment at C160–N208 adopts an RING-type; degenerate zinc-finger fold. The tract at residues R244–L301 is required for association with and ubiquitination of H3.

As to quaternary structure, interacts with MEF2C; the interaction promotes MEF2C binding to its transcription targets. Interacts with GATA4; the interaction promotes GATA4 binding to its transcription targets. Interacts with UBE2D2; the interaction inhibits cleavage of PHF7 and promotes association of the complex with the nucleosome core particle. In terms of tissue distribution, expressed in Leydig cells and in developing spermatids (at protein level). Highly expressed in Sertoli cells in testis.

The protein localises to the nucleus. It carries out the reaction S-ubiquitinyl-[E2 ubiquitin-conjugating enzyme]-L-cysteine + [acceptor protein]-L-lysine = [E2 ubiquitin-conjugating enzyme]-L-cysteine + N(6)-ubiquitinyl-[acceptor protein]-L-lysine.. It functions in the pathway protein modification; protein ubiquitination. Functionally, E3 ubiquitin-protein ligase which ubiquitinates histone H3 at 'Lys-14'. Required for male fertility, via inhibition of SPOP-mediated BRDT degradation when in the presence of acetylated histone H4 in early condensing spermatids. Stabilization of BRDT allows it to facilitate histone removal in early condensing spermatids and promote the progression of histone-to-protamine exchange. Promotes the expression of steroidogenesis proteins in the testes, and as a result plays a role in maintaining testosterone levels and repressing osteoclastogenesis. Promotes transcription of cardiac enhancer genes by facilitating binding of cardiac transcription factors such as MEF2C and GATA4 to target gene promoters. Ubiquitinates histone H4. Ubiquitinates histone H2A and H3 as part of the nucleosome core particle. This is E3 ubiquitin-protein ligase PHF7 from Mus musculus (Mouse).